Consider the following 598-residue polypeptide: Membrane protein insertase YidC (598 aa).

A helical transmembrane segment spans residues 7 to 27 (NYFIAIALSVLIVLGWQFLYM). Residues 37–71 (AQEAQKAQQQTEQVQQPAAGGATPAPASGTAPSGQ) form a disordered region. The span at 40–71 (AQKAQQQTEQVQQPAAGGATPAPASGTAPSGQ) shows a compositional bias: low complexity. The next 4 membrane-spanning stretches (helical) occupy residues 373 to 393 (FFGN…ALFF), 447 to 467 (WPVA…YITI), 492 to 512 (LFGL…WPLI), and 538 to 558 (WMPL…VIYW).

This sequence belongs to the OXA1/ALB3/YidC family. Type 1 subfamily. In terms of assembly, interacts with the Sec translocase complex via SecD. Specifically interacts with transmembrane segments of nascent integral membrane proteins during membrane integration.

It is found in the cell inner membrane. Required for the insertion and/or proper folding and/or complex formation of integral membrane proteins into the membrane. Involved in integration of membrane proteins that insert both dependently and independently of the Sec translocase complex, as well as at least some lipoproteins. Aids folding of multispanning membrane proteins. This is Membrane protein insertase YidC from Rhizobium etli (strain CIAT 652).